Consider the following 155-residue polypeptide: Cathelicidin-1 (155 aa).

The signal sequence occupies residues Met1–Ala29. Pyrrolidone carboxylic acid is present on Gln30. The propeptide occupies Gln30–Ala143. Disulfide bonds link Cys85-Cys96, Cys107-Cys124, and Cys146-Cys154.

This sequence belongs to the cathelicidin family. In terms of tissue distribution, large granules of neutrophils.

Its subcellular location is the secreted. Functionally, potent microbicidal activity; active against S.aureus and E.coli. In Bos taurus (Bovine), this protein is Cathelicidin-1 (CATHL1).